The sequence spans 714 residues: Hormonally up-regulated neu tumor-associated kinase (714 aa).

A compositionally biased stretch (low complexity) spans 1–15 (MPAAAGDGLLGEPAA). Residues 1-26 (MPAAAGDGLLGEPAAPGGGGGAEDAA) are disordered. The 259-residue stretch at 62–320 (LIGSRKLGEG…IQQALANRWL (259 aa)) folds into the Protein kinase domain. ATP contacts are provided by residues 68–76 (LGEGSFAKV) and Lys91. The Proton acceptor role is filled by Asp186. The segment covering 437-461 (KKPKEQEKRGDFLHRPFSKKLDKNL) has biased composition (basic and acidic residues). Disordered regions lie at residues 437–471 (KKPK…SGSL), 518–552 (MEFI…HKED), and 590–660 (ARRN…VKSR). Residues 599 to 611 (LSPGLPSGSMSPL) are compositionally biased toward low complexity. Over residues 623–635 (AHEDKNSPPKEEG) the composition is skewed to basic and acidic residues.

Belongs to the protein kinase superfamily. CAMK Ser/Thr protein kinase family. SNF1 subfamily.

The enzyme catalyses L-seryl-[protein] + ATP = O-phospho-L-seryl-[protein] + ADP + H(+). It catalyses the reaction L-threonyl-[protein] + ATP = O-phospho-L-threonyl-[protein] + ADP + H(+). The chain is Hormonally up-regulated neu tumor-associated kinase (HUNK) from Pan troglodytes (Chimpanzee).